The following is a 504-amino-acid chain: Protein nucleotidyltransferase YdiU (504 aa).

Glycine 99, glycine 101, arginine 102, lysine 122, aspartate 134, glycine 135, arginine 185, and arginine 192 together coordinate ATP. Aspartate 261 functions as the Proton acceptor in the catalytic mechanism. The Mg(2+) site is built by asparagine 262 and aspartate 271. Residue aspartate 271 participates in ATP binding.

This sequence belongs to the SELO family. The cofactor is Mg(2+). Mn(2+) is required as a cofactor.

The enzyme catalyses L-seryl-[protein] + ATP = 3-O-(5'-adenylyl)-L-seryl-[protein] + diphosphate. It carries out the reaction L-threonyl-[protein] + ATP = 3-O-(5'-adenylyl)-L-threonyl-[protein] + diphosphate. It catalyses the reaction L-tyrosyl-[protein] + ATP = O-(5'-adenylyl)-L-tyrosyl-[protein] + diphosphate. The catalysed reaction is L-histidyl-[protein] + UTP = N(tele)-(5'-uridylyl)-L-histidyl-[protein] + diphosphate. The enzyme catalyses L-seryl-[protein] + UTP = O-(5'-uridylyl)-L-seryl-[protein] + diphosphate. It carries out the reaction L-tyrosyl-[protein] + UTP = O-(5'-uridylyl)-L-tyrosyl-[protein] + diphosphate. Its function is as follows. Nucleotidyltransferase involved in the post-translational modification of proteins. It can catalyze the addition of adenosine monophosphate (AMP) or uridine monophosphate (UMP) to a protein, resulting in modifications known as AMPylation and UMPylation. The polypeptide is Protein nucleotidyltransferase YdiU (Methylococcus capsulatus (strain ATCC 33009 / NCIMB 11132 / Bath)).